The following is a 179-amino-acid chain: Cell division protein ZapC (179 aa).

The protein belongs to the ZapC family. In terms of assembly, interacts directly with FtsZ.

The protein localises to the cytoplasm. Functionally, contributes to the efficiency of the cell division process by stabilizing the polymeric form of the cell division protein FtsZ. Acts by promoting interactions between FtsZ protofilaments and suppressing the GTPase activity of FtsZ. This Photobacterium profundum (strain SS9) protein is Cell division protein ZapC.